Reading from the N-terminus, the 498-residue chain is UDP-N-acetylmuramate--L-alanine ligase (498 aa).

120–126 (GSHGKTT) is a binding site for ATP.

It belongs to the MurCDEF family.

It localises to the cytoplasm. It catalyses the reaction UDP-N-acetyl-alpha-D-muramate + L-alanine + ATP = UDP-N-acetyl-alpha-D-muramoyl-L-alanine + ADP + phosphate + H(+). Its pathway is cell wall biogenesis; peptidoglycan biosynthesis. Its function is as follows. Cell wall formation. The sequence is that of UDP-N-acetylmuramate--L-alanine ligase from Rickettsia typhi (strain ATCC VR-144 / Wilmington).